The chain runs to 1348 residues: Phosphoribosylformylglycinamidine synthase (1348 aa).

ATP contacts are provided by residues 300–311 (GAATGAGGEIRD) and Ala-701. Mg(2+) contacts are provided by Asp-702, Glu-741, Asn-745, and Asp-941. Ser-943 is a binding site for ATP. The Glutamine amidotransferase type-1 domain occupies 1099–1348 (VAILREQGVN…MFRNARVWCG (250 aa)). Cys-1192 serves as the catalytic Nucleophile. Catalysis depends on residues His-1313 and Glu-1315.

In the N-terminal section; belongs to the FGAMS family. Monomer.

The protein localises to the cytoplasm. The catalysed reaction is N(2)-formyl-N(1)-(5-phospho-beta-D-ribosyl)glycinamide + L-glutamine + ATP + H2O = 2-formamido-N(1)-(5-O-phospho-beta-D-ribosyl)acetamidine + L-glutamate + ADP + phosphate + H(+). It participates in purine metabolism; IMP biosynthesis via de novo pathway; 5-amino-1-(5-phospho-D-ribosyl)imidazole from N(2)-formyl-N(1)-(5-phospho-D-ribosyl)glycinamide: step 1/2. Its function is as follows. Phosphoribosylformylglycinamidine synthase involved in the purines biosynthetic pathway. Catalyzes the ATP-dependent conversion of formylglycinamide ribonucleotide (FGAR) and glutamine to yield formylglycinamidine ribonucleotide (FGAM) and glutamate. The chain is Phosphoribosylformylglycinamidine synthase from Xanthomonas axonopodis pv. citri (strain 306).